A 1107-amino-acid chain; its full sequence is uncharacterized protein (1107 aa).

Over residues 180–204 the composition is skewed to low complexity; the sequence is SGNGSSGGNNNNNNNSLNNSNNSIG. Disordered stretches follow at residues 180–251 and 501–530; these read SGNG…SGNN and LMNINNNNNNNNSNNNNNNNDQNKDKDNQM. Residues 205–215 show a composition bias toward gly residues; it reads SSGGNGGGGSN. Polar residues predominate over residues 219-237; it reads PSMSPQFTSISKTNSPQII. Composition is skewed to low complexity over residues 238–251 and 501–521; these read NTSSNNLNSSSGNN and LMNINNNNNNNNSNNNNNNND. 2 coiled-coil regions span residues 789 to 816 and 940 to 1012; these read KKDIIEHLTQRHNQYQSNINEDEQIYRE and NIDH…NMLK.

This is an uncharacterized protein from Dictyostelium discoideum (Social amoeba).